The sequence spans 108 residues: UPF0102 protein Shewmr4_3685 (108 aa).

The protein belongs to the UPF0102 family.

This chain is UPF0102 protein Shewmr4_3685, found in Shewanella sp. (strain MR-4).